The primary structure comprises 250 residues: MLMRQKGIIIKAVDYGESDKIITILNEHGAKVPLMARRAKKVKTGLQAQTQLFVYGLFIYNQWRGMGTLNSVDVISQHYKLQMDLYVSSYASLAAETIERSMDEGDIAPYNYQLLQFVLEKIESGTSAQLMSVVVMLKCMKRFGFTASFNRCAVSGNDTQADLIGYSFKFDGAISRQEASKDVHAVILSNKTLYLLDVLQKLPIDKMNSLNIHQEIIDEMSDIILMLYREYAGMFFKSQKLINQLKRLEQ.

Belongs to the RecO family.

Its function is as follows. Involved in DNA repair and RecF pathway recombination. The chain is DNA repair protein RecO from Staphylococcus aureus (strain Mu3 / ATCC 700698).